The following is a 353-amino-acid chain: Quinolinate synthase (353 aa).

Iminosuccinate-binding residues include H47 and S68. Position 113 (C113) interacts with [4Fe-4S] cluster. Residues 139–141 (YAN) and S156 each bind iminosuccinate. C200 is a [4Fe-4S] cluster binding site. Residues 226-228 (HPE) and T243 contribute to the iminosuccinate site. Residue C297 coordinates [4Fe-4S] cluster.

The protein belongs to the quinolinate synthase family. Type 1 subfamily. Requires [4Fe-4S] cluster as cofactor.

It is found in the cytoplasm. It catalyses the reaction iminosuccinate + dihydroxyacetone phosphate = quinolinate + phosphate + 2 H2O + H(+). Its pathway is cofactor biosynthesis; NAD(+) biosynthesis; quinolinate from iminoaspartate: step 1/1. Catalyzes the condensation of iminoaspartate with dihydroxyacetone phosphate to form quinolinate. The chain is Quinolinate synthase from Vibrio campbellii (strain ATCC BAA-1116).